Consider the following 520-residue polypeptide: Cholesterol side-chain cleavage enzyme, mitochondrial (520 aa).

Residues 1-39 (MLARGLPLRSALVKACPPLLNTGREGWGHHRVGTGEGAG) constitute a mitochondrion transit peptide. The tract at residues 27–48 (WGHHRVGTGEGAGISTRTPRPY) is disordered. C461 is a heme binding site.

It belongs to the cytochrome P450 family. Interacts with FDX1/adrenodoxin. Heme serves as cofactor.

It localises to the mitochondrion inner membrane. The enzyme catalyses 6 reduced [adrenodoxin] + cholesterol + 3 O2 + 6 H(+) = 4-methylpentanal + pregnenolone + 6 oxidized [adrenodoxin] + 4 H2O. The catalysed reaction is 2 reduced [adrenodoxin] + cholesterol + O2 + 2 H(+) = (22R)-hydroxycholesterol + 2 oxidized [adrenodoxin] + H2O. It catalyses the reaction (22R)-hydroxycholesterol + 2 reduced [adrenodoxin] + O2 + 2 H(+) = (20R,22R)-20,22-dihydroxycholesterol + 2 oxidized [adrenodoxin] + H2O. It carries out the reaction (20R,22R)-20,22-dihydroxycholesterol + 2 reduced [adrenodoxin] + O2 + 2 H(+) = 4-methylpentanal + pregnenolone + 2 oxidized [adrenodoxin] + 2 H2O. Its pathway is lipid metabolism; C21-steroid hormone metabolism. It functions in the pathway steroid metabolism; cholesterol metabolism. In terms of biological role, a cytochrome P450 monooxygenase that catalyzes the side-chain hydroxylation and cleavage of cholesterol to pregnenolone, the precursor of most steroid hormones. Catalyzes three sequential oxidation reactions of cholesterol, namely the hydroxylation at C22 followed with the hydroxylation at C20 to yield 20R,22R-hydroxycholesterol that is further cleaved between C20 and C22 to yield the C21-steroid pregnenolone and 4-methylpentanal. Mechanistically, uses molecular oxygen inserting one oxygen atom into a substrate and reducing the second into a water molecule. Two electrons are provided by NADPH via a two-protein mitochondrial transfer system comprising flavoprotein FDXR (adrenodoxin/ferredoxin reductase) and nonheme iron-sulfur protein FDX1 or FDX2 (adrenodoxin/ferredoxin). The sequence is that of Cholesterol side-chain cleavage enzyme, mitochondrial from Capra hircus (Goat).